A 685-amino-acid polypeptide reads, in one-letter code: Protein argonaute (685 aa).

The tract at residues M1–D99 is N-terminal domain. Residues P100–E176 are linker L1. In terms of domain architecture, PAZ spans P169–L265. A linker L2 region spans residues E272–G337. The tract at residues F338–V463 is mid domain. Residues A464–V685 are PIWI domain. Active-site residues include D478, E512, D546, and D660. Residue D478 participates in Mn(2+) binding. The Piwi domain maps to E507 to I671. Positions 546, 660, and 685 each coordinate Mn(2+).

Belongs to the argonaute family. Long pAgo subfamily. Coimmunoprecipitates with a number of proteins involved in DNA replication or recombination including RepA (initiates replication), AddA/B (TT_C0638 and TT_C0639), ArgR, GyrA/B, HU (TT_C0984), PriA, Rad52 (TT_C1923), RecJ, SSB, TopA and UvrB. Most proteins remain associated with TtAgo after DNase treatment and associate with catalytically inactive protein. Mn(2+) serves as cofactor.

Its function is as follows. A DNA-guided ssDNA endonuclease. Uses short ssDNA sequences as guides (gDNA, also called small interfering DNA, siDNA) to bind complementary DNA target strands, resulting in cleavage of the target DNA (tDNA). The cleavage site is 10 nucleotides (nt) downstream of the target residue base-paired with the 5'-end of the gDNA. Plays a role in completion of DNA replication, participates in decatenating replicated DNA and plasmid. In situ purifies with 5'-phosphorylated long DNA (about 1160 nt, maps to the whole chromosome and plasmid), 25-35 nt RNAs that map to the whole chromosome and 15-18 nt DNA that maps to the replication terminus region (ter) on the chromosome and plasmid. Most short DNA starts with dC. Has been shown to have guide sequence-independent dsDNase activity called 'chopping', which requires unstable DNA (high AT-content, multiple mismatches or low salt conditions), and could be used to generate gDNA. Preferentially binds tDNA with dC at its 3'-terminus. Has also been shown to have no detectable guide sequence-independent dsDNase activity. The latter study proposes TtAgo may acquire gDNA from nicked dsDNA, by binding to 5'-phosphorylated-dC nicks, then cleaving 10 nt away on the opposite strand; subsequently an exonuclease (maybe AddA-AddB helicase/nuclease) trims the ends to generate the gDNA. Involved in defense against invading mobile genetic elements. TtAgo interferes with plasmid DNA, stimulates expression of specific endogenous genes, including various CRISPR loci and at least part of the CRISPR adaptation machinery, but only when exogenous plasmid DNA is present. Upon purification from E.coli associates with gDNA 13-25 nt long with 5'-phosphorylated ends and with 10-150 nt RNA with 5'-OH. DNA corresponds to the expression plasmid rather than chromosomal DNA; 89% of gDNA starts with dC and 72% has dA in the second position. Endonucleolytically cleaves tDNA with 5'-phosphorylated gDNA but not 5'-phosphorylated gRNA; the active site is involved in processing or binding of ssDNA. Nicks or linearizes supercoiled plasmid target when it has the appropriate gDNA sequences, does not cleave linear tDNA. Positions 4 to 16 of the tDNA need to be base paired to the gDNA for efficient tDNA cleavage. Although the system can support single nucleotide insertions in either the gDNA or tDNA, in all cases cleavage activity is reduced, with a wide range of sequence- and position-specific effects. In terms of biological role, first characterized as a DNA-guided RNA endonuclease. Uses gDNA to bind complementary RNA target strands, resulting in cleavage of the target RNA. The cleavage site is 10 nucleotides (nt) downstream of the target residue base-paired with the 5'-end of the guide DNA. This Thermus thermophilus (strain ATCC BAA-163 / DSM 7039 / HB27) protein is Protein argonaute.